Here is a 465-residue protein sequence, read N- to C-terminus: Neutrophil collagenase (465 aa).

An N-terminal signal peptide occupies residues 1–20; sequence MFRLKTLPLLIFLHTQLANA. A propeptide spans 21 to 100 (activation peptide); the sequence is FPVPEHLEEK…CGVPDSGDFL (80 aa). Asn55 is a glycosylation site (N-linked (GlcNAc...) asparagine). The short motif at 89 to 96 is the Cysteine switch element; sequence PRCGVPDS. Position 91 (Cys91) interacts with Zn(2+). Asn112 is a glycosylation site (N-linked (GlcNAc...) asparagine). Asp157 contacts Ca(2+). The Zn(2+) site is built by His167 and Asp169. Asp174, Gly175, Asn177, and Ile179 together coordinate Ca(2+). His182 is a Zn(2+) binding site. The Ca(2+) site is built by Gly189, Gly191, and Asp193. His195 is a binding site for Zn(2+). 2 residues coordinate Ca(2+): Asp197 and Glu200. Residue His217 participates in Zn(2+) binding. Glu218 is an active-site residue. Residues His221 and His227 each contribute to the Zn(2+) site. 4 Hemopexin repeats span residues 276 to 325, 326 to 372, 374 to 420, and 421 to 464; these read PKAC…WPFL, PNGL…GFPR, VQAI…FPGV, and NCRV…WLNC. A disulfide bond links Cys279 and Cys464. Asp286 contributes to the Ca(2+) binding site. Positions 378 and 425 each coordinate Ca(2+).

Belongs to the peptidase M10A family. Requires Ca(2+) as cofactor. Zn(2+) serves as cofactor. In terms of tissue distribution, neutrophils. Expressed in uterus. Low levels in kidney and muscle.

It is found in the cytoplasmic granule. Its subcellular location is the secreted. The protein resides in the extracellular space. It localises to the extracellular matrix. It carries out the reaction Cleavage of interstitial collagens in the triple helical domain. Unlike EC 3.4.24.7, this enzyme cleaves type III collagen more slowly than type I.. Its activity is regulated as follows. Cannot be activated without removal of the activation peptide. Activated by matrilysin. Functionally, can degrade fibrillar type I, II, and III collagens. May play a role in the degradation of collagen fibers during uterine involution. This chain is Neutrophil collagenase (Mmp8), found in Mus musculus (Mouse).